We begin with the raw amino-acid sequence, 175 residues long: NADH-ubiquinone oxidoreductase chain 6 (175 aa).

The next 5 membrane-spanning stretches (helical) occupy residues 1–21 (MMMY…VGVS), 25–45 (SPIY…GVIL), 47–67 (FGGS…MLVV), 88–108 (VVLG…IYAL), and 149–169 (YGVW…VIIM).

This sequence belongs to the complex I subunit 6 family. Core subunit of respiratory chain NADH dehydrogenase (Complex I) which is composed of 45 different subunits.

It is found in the mitochondrion inner membrane. It carries out the reaction a ubiquinone + NADH + 5 H(+)(in) = a ubiquinol + NAD(+) + 4 H(+)(out). Functionally, core subunit of the mitochondrial membrane respiratory chain NADH dehydrogenase (Complex I) which catalyzes electron transfer from NADH through the respiratory chain, using ubiquinone as an electron acceptor. Essential for the catalytic activity and assembly of complex I. In Balaenoptera physalus (Fin whale), this protein is NADH-ubiquinone oxidoreductase chain 6 (MT-ND6).